A 370-amino-acid polypeptide reads, in one-letter code: Allatostatins (370 aa).

A signal peptide spans 1–27; that stretch reads MSGPRTCFCLPSALVLVLLSLSTSALG. A propeptide spanning residues 28–65 is cleaved from the precursor; that stretch reads TAPEPSGVHEESPAGGGTDLLPHPEDLSASDNPDLEFV. Residues 29-58 are disordered; it reads APEPSGVHEESPAGGGTDLLPHPEDLSASD. Leucine 73, leucine 94, leucine 105, and leucine 117 each carry leucine amide. Residues 121 to 151 constitute a propeptide that is removed on maturation; that stretch reads DYDYYGEEDEDDQQAIGDEDIEESDVGDLMD. Residues leucine 161, leucine 172, leucine 188, leucine 200, leucine 213, and leucine 232 each carry the leucine amide modification. Residues 236–251 constitute a propeptide that is removed on maturation; it reads SDDIDFRELEEKFAED. Leucine amide is present on leucine 264. Residues 268-345 constitute a propeptide that is removed on maturation; it reads EVEPSELEAV…ITPEEFSRMV (78 aa). The segment at 273-298 is disordered; it reads ELEAVRNEEKDNSSVHDKKNNTNDMH. At leucine 353 the chain carries Leucine amide. Isoleucine amide is present on isoleucine 364. A propeptide spanning residues 368 to 370 is cleaved from the precursor; it reads SER.

The protein belongs to the allatostatin family. As to expression, brain, subesophageal ganglion and corpus allatum.

Its subcellular location is the secreted. Functionally, neuropeptide inhibitors of juvenile hormone synthesis and gut muscle contraction. In Diploptera punctata (Pacific beetle cockroach), this protein is Allatostatins.